Reading from the N-terminus, the 227-residue chain is 2,3-bisphosphoglycerate-dependent phosphoglycerate mutase (227 aa).

Substrate contacts are provided by residues 7–14 (RHGFSEWN), 20–21 (TG), arginine 59, 86–89 (ERHY), lysine 97, 113–114 (RR), and 182–183 (GN). Histidine 8 (tele-phosphohistidine intermediate) is an active-site residue. Glutamate 86 (proton donor/acceptor) is an active-site residue.

Belongs to the phosphoglycerate mutase family. BPG-dependent PGAM subfamily. Homodimer.

It carries out the reaction (2R)-2-phosphoglycerate = (2R)-3-phosphoglycerate. The protein operates within carbohydrate degradation; glycolysis; pyruvate from D-glyceraldehyde 3-phosphate: step 3/5. Functionally, catalyzes the interconversion of 2-phosphoglycerate and 3-phosphoglycerate. This Haemophilus influenzae (strain ATCC 51907 / DSM 11121 / KW20 / Rd) protein is 2,3-bisphosphoglycerate-dependent phosphoglycerate mutase.